A 283-amino-acid polypeptide reads, in one-letter code: Zinc import ATP-binding protein ZnuC (283 aa).

Residues 13 to 228 (VEMRNAGVHR…PEYVRLFGAR (216 aa)) enclose the ABC transporter domain. 45 to 52 (GPNGSGKS) contributes to the ATP binding site. Positions 264 to 283 (HHHDHARDGGQGGGGHGHAG) are disordered. Residues 272-283 (GGQGGGGHGHAG) show a composition bias toward gly residues.

The protein belongs to the ABC transporter superfamily. Zinc importer (TC 3.A.1.15.5) family. As to quaternary structure, the complex is composed of two ATP-binding proteins (ZnuC), two transmembrane proteins (ZnuB) and a solute-binding protein (ZnuA).

The protein resides in the cell inner membrane. It carries out the reaction Zn(2+)(out) + ATP(in) + H2O(in) = Zn(2+)(in) + ADP(in) + phosphate(in) + H(+)(in). Its function is as follows. Part of the ABC transporter complex ZnuABC involved in zinc import. Responsible for energy coupling to the transport system. The chain is Zinc import ATP-binding protein ZnuC from Chelativorans sp. (strain BNC1).